Reading from the N-terminus, the 88-residue chain is Alpha-latrotoxin-associated low molecular weight protein (88 aa).

The N-terminal stretch at 1–18 (MSKLFFVVFLCLIISVFA) is a signal peptide.

This sequence belongs to the arthropod CHH/MIH/GIH/VIH hormone family. In terms of tissue distribution, expressed by the venom gland.

It localises to the secreted. In terms of biological role, may increase the toxicity of alpha-latrotoxin and/or other venom components. Is non-toxic to mice and to the cockroach Periplaneta americana. The protein is Alpha-latrotoxin-associated low molecular weight protein of Latrodectus tredecimguttatus (Mediterranean black widow spider).